The sequence spans 99 residues: uncharacterized protein (99 aa).

This is an uncharacterized protein from Bacillus subtilis (strain 168).